We begin with the raw amino-acid sequence, 356 residues long: Sensor protein BasS (356 aa).

Residues 1–13 (MRFQRRAMTLRQR) lie on the Cytoplasmic side of the membrane. Residues 14–34 (LMLTIGLILLVFQLISTFWLW) traverse the membrane as a helical segment. At 35–64 (HESTEQIQLFEQALRDNRNNDRHIMHEIRE) the chain is on the periplasmic side. Residues 65–88 (AVASLIVPGVFMVSLTLLICYQAV) form a helical membrane-spanning segment. Positions 89-141 (RRITRPLAELQKELEARTADNLAPIAIHSSTLEIESVVSAINQLVTRLTTTLD) constitute an HAMP domain. At 89–356 (RRITRPLAEL…TRAWVLLKKA (268 aa)) the chain is on the cytoplasmic side. The 208-residue stretch at 149 to 356 (DVAHELRTPL…TRAWVLLKKA (208 aa)) folds into the Histidine kinase domain. At H152 the chain carries Phosphohistidine; by autocatalysis.

Autophosphorylated.

It is found in the cell inner membrane. It catalyses the reaction ATP + protein L-histidine = ADP + protein N-phospho-L-histidine.. Its function is as follows. Member of the two-component regulatory system BasS/BasR. Autophosphorylates and activates BasR by phosphorylation. Plays a role in the adaptation of the organism to the host environment, in particular to neutrophils, and therefore it plays a role in virulence as well. This Salmonella typhimurium (strain LT2 / SGSC1412 / ATCC 700720) protein is Sensor protein BasS (basS).